The primary structure comprises 1387 residues: MEVLMAERADLVFHNKAIDGTAMKRLISRLIDHFGMAYTSHILDQVKTLGFQQATATSISLGIDDLLTIPSKGWLVQDAEQQSLILEKHHHYGNVHAVEKLRQSIEIWYATSEYLRQEMNPNFRMTNPSNPVHIMSFSGARGNASQVHQLVGMRGLMSDPQGQMIDLPIQSNLREGLSLTEYIISCYGARKGVVDTAVRTSDAGYLTRRLVEVVQHIVVRRTDCGTLQGISVSPRNGMITERILIQTLIGRVLADDIYMGPRCIAARNQDIGIGLVNRFITFGAQPISIRTPFTCRSISWICRLCYGRSPTHGDLVELGEAVGIIAGQSIGEPGTQLTLRTFHTGGVFTGGTAEHVRAPSNGKIKFNEDLVHPTRTRHGHPAFLCYIDLYVTIESQDIIHNVNIPPKSFLLVQNDQYVESEQVIAEIRAGTSTLNFKERVRKHIYSDSEGEMHWSTNVYHAPEYTYSHVHLLPKTSHLWILSGGSYRSSIVPLSLHKDQDQMNVHSLSVERRYISNFSVTNDQVRHKLFNSYPSSKKGERILDYSGTDRIICNGHCNFIYPSILHENSDLLAKRRRNRFIIPFQSNQEREKELMSRSDISIEIPINGIFRRNSILAYFDDPRYRRNNSGITKYGTIEVHAIVKKEDLIEYRRAKEFRPKYQMKVDRFFFIPEEVHILPGSSSIMVRNNSIIGVDTRITLNARSRVGGLVRVERKKKRIELKIFSGDIHFPGETDKISRHSGILIPPGTGKKNSKKSKKKLQNWIYVQRITPIKKKYFVFVRPVVTYEIADGINLATLFPQDLLQERDNVQLRVVNYILYANGKPIRGISHTTIQLVRTCLVLNWDQGKNGSSIKEVHASFVEVRANDLIQDFIRMDLVKSTISHTGKRNDPAGSGLIPDNGSDRTNINPFYSKARIQQSLSRHQGTLRSLLNRNKECQSLIILSSSNCSQMGPLNTLKYHNVTKESIKRDPPIPIRNSLGPLGTVPKITNFYSSYYQLITHNQILVSKYLLLANLKQTLQVFKYYLMDENGKIYNPDPCSNIIFNPFNLNWYFLHHDYCEETSTIISLGQFFCENVCISKKGPHLKSGQVLIVHVDSLVIRSAKPYLATPGATVHGHYGEILYKGDTLVTFIYEKSRSGDITQGLPKVEQVLEVRSIDSISMTLENRVEGWNERITRILGIPWEYLIGAELTIAQSRISLVNKIQKVYRSQGVQIHNRHIEIIVRQITSKVLVSEDGMSNVFSPGELIGLFRAERTGRALEEAICYRAVLLGITRASLNTQSFISEASFQETARVLAKAALRGRIDWLKGLKENVVLGGMIPVGTGFKGLVHRSREHNNIPLEIKKKNLFEGEMRDTLFHHRELFDSCIPKNFHDTSKQSFTGFNDF.

4 residues coordinate Zn(2+): cysteine 224, cysteine 295, cysteine 302, and cysteine 305. The interval 883-903 is disordered; it reads SHTGKRNDPAGSGLIPDNGSD.

It belongs to the RNA polymerase beta' chain family. RpoC2 subfamily. In terms of assembly, in plastids the minimal PEP RNA polymerase catalytic core is composed of four subunits: alpha, beta, beta', and beta''. When a (nuclear-encoded) sigma factor is associated with the core the holoenzyme is formed, which can initiate transcription. The cofactor is Zn(2+).

The protein localises to the plastid. It localises to the chloroplast. It carries out the reaction RNA(n) + a ribonucleoside 5'-triphosphate = RNA(n+1) + diphosphate. Its function is as follows. DNA-dependent RNA polymerase catalyzes the transcription of DNA into RNA using the four ribonucleoside triphosphates as substrates. This is DNA-directed RNA polymerase subunit beta'' from Platanus occidentalis (Sycamore).